The following is a 346-amino-acid chain: MSELKQKQVFKEKVMHSEEEDVSPELNTQKTFSEKETFIPVEIEEQQKETEQELQLEQVIRPKSGRKWLTTGLFATFAGLVVWQAVDSVITAIQTADWLALGWVGFITTIASFGLGALGKELWKLRKLRNHFSVQEESEALIDSQSVGKGKAFCEKVAEQSGVLAENPGFDRWKNSVNPAHSDAEILEMYDSMVVSQQDKLATKIVSQHATESAALVAVSPLAAADMLLVAWRNFKMIDNLSKVYGVELGYASRIKLLRSVFVNMAAAGASELAIDASMDLMSMDLAGKISARAGQGLGVGILTARLGLKSMALLRPLPWYPERQVKLGAIRKEVVAKVASITMKP.

Positions 1-17 are enriched in basic and acidic residues; the sequence is MSELKQKQVFKEKVMHS. The tract at residues 1 to 28 is disordered; the sequence is MSELKQKQVFKEKVMHSEEEDVSPELNT. Transmembrane regions (helical) follow at residues 73–93 and 98–118; these read LFAT…ITAI and WLAL…LGAL.

It belongs to the UPF0283 family.

Its subcellular location is the cell inner membrane. The protein is UPF0283 membrane protein VIBHAR_01918 of Vibrio campbellii (strain ATCC BAA-1116).